A 678-amino-acid chain; its full sequence is DNA ligase (678 aa).

Residues 47–51, 96–97, and Glu-122 each bind NAD(+); these read DSDYD and SL. The N6-AMP-lysine intermediate role is filled by Lys-124. Arg-145, Glu-182, Lys-300, and Lys-324 together coordinate NAD(+). Zn(2+) contacts are provided by Cys-418, Cys-421, Cys-436, and Cys-442. Residues 602-678 form the BRCT domain; it reads AYNESFTGKT…ILEDNLKDLL (77 aa).

This sequence belongs to the NAD-dependent DNA ligase family. LigA subfamily. Mg(2+) serves as cofactor. It depends on Mn(2+) as a cofactor.

The catalysed reaction is NAD(+) + (deoxyribonucleotide)n-3'-hydroxyl + 5'-phospho-(deoxyribonucleotide)m = (deoxyribonucleotide)n+m + AMP + beta-nicotinamide D-nucleotide.. In terms of biological role, DNA ligase that catalyzes the formation of phosphodiester linkages between 5'-phosphoryl and 3'-hydroxyl groups in double-stranded DNA using NAD as a coenzyme and as the energy source for the reaction. It is essential for DNA replication and repair of damaged DNA. This Francisella tularensis subsp. novicida (strain U112) protein is DNA ligase.